The primary structure comprises 1152 residues: Syntaxin-binding protein 5 (1152 aa).

A disordered region spans residues 14–35 (TAGSSSASQQQQQQQHPPGNRE). The span at 17–28 (SSSASQQQQQQQ) shows a compositional bias: low complexity. WD repeat units lie at residues 62-95 (SALA…CYCQ), 102-141 (VIQL…SLKF), 146-182 (VTFC…GYVI), 201-235 (HISD…DYRY), 241-273 (IHSV…PTKP), 295-337 (PILK…KSTA), 345-379 (IVDF…LIDL), 401-478 (TCCE…YKLK), 506-620 (QIIS…ELVI), and 634-696 (TSLA…SGAG). Disordered stretches follow at residues 557 to 596 (TPEG…GLRD) and 675 to 731 (SNDP…QKVN). Ser693 bears the Phosphoserine mark. The span at 713 to 722 (SPTSGSSSPH) shows a compositional bias: low complexity. The residue at position 724 (Ser724) is a Phosphoserine; by PKA. Ser760 carries the phosphoserine modification. Residue Thr763 is modified to Phosphothreonine. A Phosphoserine modification is found at Ser783. Thr785 is modified (phosphothreonine). Position 786 is a phosphoserine (Ser786). WD repeat units lie at residues 795–852 (ISAL…SGTI), 861–935 (RMAF…QNCA), 940–984 (ITET…LDVY), and 998–1021 (CFAN…TYSQ). The segment covering 879–893 (WTEHNVPEEKDEKEK) has biased composition (basic and acidic residues). The tract at residues 879–907 (WTEHNVPEEKDEKEKLKKRRPVSVSPSSS) is disordered. 2 positions are modified to phosphoserine: Ser901 and Ser903. Residue Thr1040 is modified to Phosphothreonine. Phosphoserine occurs at positions 1059 and 1132. Residues 1087–1147 (GIEGVKGAAS…HEMMLKYKDK (61 aa)) form the v-SNARE coiled-coil homology domain.

Belongs to the WD repeat L(2)GL family. Part of a complex that contains STXBP5, STX4A and SNAP23. Interacts with STX1A and STX4A via its v-SNARE homology domain. Part of a complex that contains STX1, STXBP5, SNAP25 and SYT1. Post-translationally, phosphorylation by PKA reduces interaction with STX1A and enhances synaptic neurotransmitter release. As to expression, isoform 1 is detected in heart, brain, lung, liver, skeletal muscle, kidney and testis. Isoform 2 is detected in brain and in testis. Isoform 3 is detected in testis.

The protein resides in the cytoplasm. It localises to the cell membrane. The protein localises to the cytoplasmic vesicle membrane. It is found in the synapse. Its subcellular location is the cytoplasmic vesicle. The protein resides in the secretory vesicle. It localises to the synaptic vesicle. In terms of biological role, inhibits translocation of GLUT4 from intracellular vesicles to the plasma membrane. Plays a regulatory role in calcium-dependent exocytosis and neurotransmitter release. Inhibits membrane fusion between transport vesicles and the plasma membrane. May modulate the assembly of trans-SNARE complexes between transport vesicles and the plasma membrane. Competes with STXBP1 for STX1 binding. The protein is Syntaxin-binding protein 5 (Stxbp5) of Rattus norvegicus (Rat).